We begin with the raw amino-acid sequence, 201 residues long: Recombination protein RecR (201 aa).

The C4-type zinc-finger motif lies at 57–72 (CRSCRTFTEEDECNIC). The Toprim domain occupies 81 to 176 (GQLCVVEMPE…KVTRIAHGIP (96 aa)).

The protein belongs to the RecR family.

In terms of biological role, may play a role in DNA repair. It seems to be involved in an RecBC-independent recombinational process of DNA repair. It may act with RecF and RecO. The chain is Recombination protein RecR from Actinobacillus pleuropneumoniae serotype 5b (strain L20).